Consider the following 551-residue polypeptide: Putative ABC transporter ATP-binding protein BT9727_3105 (551 aa).

ABC transporter domains lie at A5 to F243 and L293 to R525. ATP is bound by residues G39–T46 and G327–S334.

Belongs to the ABC transporter superfamily.

The protein localises to the cell membrane. In terms of biological role, probably part of an ABC transporter complex. Responsible for energy coupling to the transport system. In Bacillus thuringiensis subsp. konkukian (strain 97-27), this protein is Putative ABC transporter ATP-binding protein BT9727_3105.